Here is a 122-residue protein sequence, read N- to C-terminus: Large ribosomal subunit protein uL14c (122 aa).

The protein belongs to the universal ribosomal protein uL14 family. Part of the 50S ribosomal subunit.

It localises to the plastid. It is found in the chloroplast. Binds to 23S rRNA. The protein is Large ribosomal subunit protein uL14c of Liriodendron tulipifera (Tuliptree).